Reading from the N-terminus, the 427-residue chain is Probable purple acid phosphatase 20 (427 aa).

An N-terminal signal peptide occupies residues 1-21 (MVKVLGLVAILLIVLAGNVLS). Asn-85 carries N-linked (GlcNAc...) asparagine glycosylation. Fe cation-binding residues include Asp-147, Asp-174, and Tyr-177. Asp-174 provides a ligand contact to Zn(2+). Residues Asn-207 and His-291 each contribute to the Zn(2+) site. A substrate-binding site is contributed by Asn-207. His-301 (proton donor) is an active-site residue. Residue His-330 coordinates Zn(2+). 330–332 (HVH) serves as a coordination point for substrate. His-332 provides a ligand contact to Fe cation. Residue Asn-392 is glycosylated (N-linked (GlcNAc...) asparagine).

It belongs to the metallophosphoesterase superfamily. Purple acid phosphatase family. In terms of assembly, homodimer. Requires Fe cation as cofactor. It depends on Zn(2+) as a cofactor. Expressed flowers and siliques.

The protein localises to the secreted. It catalyses the reaction a phosphate monoester + H2O = an alcohol + phosphate. The chain is Probable purple acid phosphatase 20 (PAP20) from Arabidopsis thaliana (Mouse-ear cress).